The sequence spans 475 residues: Putative aldehyde dehydrogenase SH0913 (475 aa).

Position 201–207 (201–207 (GDGEGVG)) interacts with NAD(+). Residues E245 and C279 contribute to the active site.

It belongs to the aldehyde dehydrogenase family.

The enzyme catalyses an aldehyde + NAD(+) + H2O = a carboxylate + NADH + 2 H(+). This chain is Putative aldehyde dehydrogenase SH0913, found in Staphylococcus haemolyticus (strain JCSC1435).